A 99-amino-acid polypeptide reads, in one-letter code: MPDLKIILEFSAGAELLFGNIKRRELALDGDQKWTIANLLKWMHANILTERPELFIQESTVRPGILVLINDTDWELLGELDYELQQNDNVLFISTLHGG.

Gly99 bears the 1-thioglycine mark. Gly99 is covalently cross-linked (Glycyl lysine isopeptide (Gly-Lys) (interchain with K-? in acceptor proteins)).

This sequence belongs to the URM1 family. In terms of assembly, interacts with cer. In terms of processing, C-terminal thiocarboxylation occurs in 2 steps, it is first acyl-adenylated (-COAMP) via the hesA/moeB/thiF part of the MOCS3 homolog, then thiocarboxylated (-COSH) via the rhodanese domain of the MOCS3 homolog.

The protein localises to the cytoplasm. The protein operates within tRNA modification; 5-methoxycarbonylmethyl-2-thiouridine-tRNA biosynthesis. Its function is as follows. Acts as a sulfur carrier required for 2-thiolation of mcm(5)S(2)U at tRNA wobble positions of cytosolic tRNA(Lys), tRNA(Glu) and tRNA(Gln). Serves as sulfur donor in tRNA 2-thiolation reaction by being thiocarboxylated (-COSH) at its C-terminus by MOCS3. The sulfur is then transferred to tRNA to form 2-thiolation of mcm(5)S(2)U. Also acts as a ubiquitin-like protein (UBL) that is covalently conjugated via an isopeptide bond to lysine residues of target proteins such as Prx2/Jafrac1, Ciao1, Eip71CD and GILT1. The thiocarboxylated form serves as substrate for conjugation and oxidative stress specifically induces the formation of UBL-protein conjugates. The protein is Ubiquitin-related modifier 1 homolog of Drosophila virilis (Fruit fly).